Here is a 264-residue protein sequence, read N- to C-terminus: MKSYENDPITDKLPKLKSSREWLEPQPLSFMEVLAKEDVDTAIQSILYRENYIIKELDKCLKHHDFLNARRKEILYKRWVDHVADPLQKKIIEKVTSYKKIKKRRQEELDGFLKYVNKKGNAFIEHYDPKEYDPFYMNRENPNFLKVTIPPFRDPLKKAQYDKDDGKRILLQCETGKIYTMKEFKEVEKAKLHSRFPGISNSRHLMTPNEWIRLPPNYIESEFCKRSRLKIKVNFNESSFDLKPSVRTPHPEFQKEDKAVHYKF.

Belongs to the FAM228 family.

The chain is Protein FAM228B (FAM228B) from Bos taurus (Bovine).